Reading from the N-terminus, the 258-residue chain is Acetylglutamate kinase (258 aa).

Substrate-binding positions include Gly44–Gly45, Arg66, and Asn158. ATP-binding positions include Asp181–Leu186 and Ile209–Thr211.

The protein belongs to the acetylglutamate kinase family. ArgB subfamily. Homodimer.

It is found in the cytoplasm. It catalyses the reaction N-acetyl-L-glutamate + ATP = N-acetyl-L-glutamyl 5-phosphate + ADP. It participates in amino-acid biosynthesis; L-arginine biosynthesis; N(2)-acetyl-L-ornithine from L-glutamate: step 2/4. Its function is as follows. Catalyzes the ATP-dependent phosphorylation of N-acetyl-L-glutamate. The chain is Acetylglutamate kinase from Escherichia coli O157:H7.